The following is a 224-amino-acid chain: 7-cyano-7-deazaguanine synthase (224 aa).

Residue 14–24 (FSGGQDSTTCL) coordinates ATP. Residues Cys190, Cys198, Cys201, and Cys204 each contribute to the Zn(2+) site.

The protein belongs to the QueC family. Zn(2+) serves as cofactor.

The enzyme catalyses 7-carboxy-7-deazaguanine + NH4(+) + ATP = 7-cyano-7-deazaguanine + ADP + phosphate + H2O + H(+). Its pathway is purine metabolism; 7-cyano-7-deazaguanine biosynthesis. Its function is as follows. Catalyzes the ATP-dependent conversion of 7-carboxy-7-deazaguanine (CDG) to 7-cyano-7-deazaguanine (preQ(0)). This chain is 7-cyano-7-deazaguanine synthase, found in Haemophilus ducreyi (strain 35000HP / ATCC 700724).